Reading from the N-terminus, the 264-residue chain is GTP cyclohydrolase FolE2 (264 aa).

It belongs to the GTP cyclohydrolase IV family.

It carries out the reaction GTP + H2O = 7,8-dihydroneopterin 3'-triphosphate + formate + H(+). Its pathway is cofactor biosynthesis; 7,8-dihydroneopterin triphosphate biosynthesis; 7,8-dihydroneopterin triphosphate from GTP: step 1/1. Converts GTP to 7,8-dihydroneopterin triphosphate. This chain is GTP cyclohydrolase FolE2, found in Akkermansia muciniphila (strain ATCC BAA-835 / DSM 22959 / JCM 33894 / BCRC 81048 / CCUG 64013 / CIP 107961 / Muc).